We begin with the raw amino-acid sequence, 421 residues long: 4-hydroxy-3-methylbut-2-en-1-yl diphosphate synthase (flavodoxin) (421 aa).

Residues C300, C303, C346, and E353 each contribute to the [4Fe-4S] cluster site.

This sequence belongs to the IspG family. Requires [4Fe-4S] cluster as cofactor.

The enzyme catalyses (2E)-4-hydroxy-3-methylbut-2-enyl diphosphate + oxidized [flavodoxin] + H2O + 2 H(+) = 2-C-methyl-D-erythritol 2,4-cyclic diphosphate + reduced [flavodoxin]. It functions in the pathway isoprenoid biosynthesis; isopentenyl diphosphate biosynthesis via DXP pathway; isopentenyl diphosphate from 1-deoxy-D-xylulose 5-phosphate: step 5/6. Functionally, converts 2C-methyl-D-erythritol 2,4-cyclodiphosphate (ME-2,4cPP) into 1-hydroxy-2-methyl-2-(E)-butenyl 4-diphosphate. The polypeptide is 4-hydroxy-3-methylbut-2-en-1-yl diphosphate synthase (flavodoxin) (Laribacter hongkongensis (strain HLHK9)).